The primary structure comprises 262 residues: Glucosamine-6-phosphate deaminase (262 aa).

Catalysis depends on Asp-63, which acts as the Proton acceptor; for enolization step. Residue Asn-129 is the For ring-opening step of the active site. The active-site Proton acceptor; for ring-opening step is the His-131. The active-site For ring-opening step is Glu-136.

This sequence belongs to the glucosamine/galactosamine-6-phosphate isomerase family. NagB subfamily.

It carries out the reaction alpha-D-glucosamine 6-phosphate + H2O = beta-D-fructose 6-phosphate + NH4(+). It functions in the pathway amino-sugar metabolism; N-acetylneuraminate degradation; D-fructose 6-phosphate from N-acetylneuraminate: step 5/5. Catalyzes the reversible isomerization-deamination of glucosamine 6-phosphate (GlcN6P) to form fructose 6-phosphate (Fru6P) and ammonium ion. The polypeptide is Glucosamine-6-phosphate deaminase (Bacillus cereus (strain B4264)).